The primary structure comprises 154 residues: Protein X (154 aa).

A mitochondrial targeting sequence region spans residues 68–117; that stretch reads PCALRFTSARRMETTVNAHRNLPKVLHKRTLGLSAMSTTDLEAHFKDCVF.

This sequence belongs to the orthohepadnavirus protein X family. In terms of assembly, may form homodimer. May interact with host CEBPA, CFLAR, CREB1, DDB1, E4F1, HBXIP, HSPD1/HSP60, NFKBIA, POLR2E and SMAD4. Interacts with host SMC5-SMC6 complex and induces its degradation. Interacts with host TRPC4AP; leading to prevent ubiquitination of TRPC4AP. Interacts with host PLSCR1; this interaction promotes ubiquitination and degradation of HBx and impairs HBx-mediated cell proliferation. A fraction may be phosphorylated in insect cells and HepG2 cells, a human hepatoblastoma cell line. Phosphorylated in vitro by host protein kinase C or mitogen-activated protein kinase. N-acetylated in insect cells.

It localises to the host cytoplasm. It is found in the host nucleus. The protein resides in the host mitochondrion. Multifunctional protein that plays a role in silencing host antiviral defenses and promoting viral transcription. Does not seem to be essential for HBV infection. May be directly involved in development of cirrhosis and liver cancer (hepatocellular carcinoma). Most of cytosolic activities involve modulation of cytosolic calcium. The effect on apoptosis is controversial depending on the cell types in which the studies have been conducted. May induce apoptosis by localizing in mitochondria and causing loss of mitochondrial membrane potential. May also modulate apoptosis by binding host CFLAR, a key regulator of the death-inducing signaling complex (DISC). Promotes viral transcription by using the host E3 ubiquitin ligase DDB1 to target the SMC5-SMC6 complex to proteasomal degradation. This host complex would otherwise bind to viral episomal DNA, and prevents its transcription. Moderately stimulates transcription of many different viral and cellular transcription elements. Promoters and enhancers stimulated by HBx contain DNA binding sites for NF-kappa-B, AP-1, AP-2, c-EBP, ATF/CREB, or the calcium-activated factor NF-AT. In Hepatitis B virus genotype B2 (isolate Indonesia/pIDW420/1988) (HBV-B), this protein is Protein X.